The chain runs to 208 residues: CASP-like protein 2A1 (208 aa).

The Cytoplasmic portion of the chain corresponds to 1-36 (MSKMAEQKAAAVDGLGGAGAADAAPAGEAAAARVRP). Residues 37 to 57 (VETLLRAAPLGLCVAAMTVML) form a helical membrane-spanning segment. Over 58–78 (RDQQSNEYGTVAYSDLGGFKY) the chain is Extracellular. The chain crosses the membrane as a helical span at residues 79 to 99 (LVYANGLCAAYSLVSAFYTAV). Topologically, residues 100–108 (PRPATVSRS) are cytoplasmic. A helical membrane pass occupies residues 109-129 (WVVFLLDQVFTYLILAAGAAA). The Extracellular portion of the chain corresponds to 130–161 (AELLYLAYNGDKEVTWSEACGVFGSFCRQART). A helical membrane pass occupies residues 162 to 182 (SVAITFGTVLCFILLSLISSY). At 183–208 (RLFSAYEAPPSSALGSKGVEIAAYPR) the chain is on the cytoplasmic side.

The protein belongs to the Casparian strip membrane proteins (CASP) family. Homodimer and heterodimers.

The protein localises to the cell membrane. The protein is CASP-like protein 2A1 of Sorghum bicolor (Sorghum).